Reading from the N-terminus, the 122-residue chain is Large ribosomal subunit protein bL19 (122 aa).

Belongs to the bacterial ribosomal protein bL19 family.

Functionally, this protein is located at the 30S-50S ribosomal subunit interface and may play a role in the structure and function of the aminoacyl-tRNA binding site. This chain is Large ribosomal subunit protein bL19, found in Mycoplasmoides gallisepticum (strain R(low / passage 15 / clone 2)) (Mycoplasma gallisepticum).